Consider the following 467-residue polypeptide: 3-isopropylmalate dehydratase large subunit (467 aa).

Cysteine 349, cysteine 409, and cysteine 412 together coordinate [4Fe-4S] cluster.

Belongs to the aconitase/IPM isomerase family. LeuC type 1 subfamily. In terms of assembly, heterodimer of LeuC and LeuD. [4Fe-4S] cluster is required as a cofactor.

It catalyses the reaction (2R,3S)-3-isopropylmalate = (2S)-2-isopropylmalate. It participates in amino-acid biosynthesis; L-leucine biosynthesis; L-leucine from 3-methyl-2-oxobutanoate: step 2/4. In terms of biological role, catalyzes the isomerization between 2-isopropylmalate and 3-isopropylmalate, via the formation of 2-isopropylmaleate. The chain is 3-isopropylmalate dehydratase large subunit from Vibrio cholerae serotype O1 (strain ATCC 39541 / Classical Ogawa 395 / O395).